We begin with the raw amino-acid sequence, 429 residues long: Enolase (429 aa).

Gln162 contacts (2R)-2-phosphoglycerate. The Proton donor role is filled by Glu204. Residues Asp241, Glu288, and Asp315 each contribute to the Mg(2+) site. 4 residues coordinate (2R)-2-phosphoglycerate: Lys340, Arg369, Ser370, and Lys391. Catalysis depends on Lys340, which acts as the Proton acceptor.

The protein belongs to the enolase family. Requires Mg(2+) as cofactor.

It is found in the cytoplasm. Its subcellular location is the secreted. The protein localises to the cell surface. The enzyme catalyses (2R)-2-phosphoglycerate = phosphoenolpyruvate + H2O. It functions in the pathway carbohydrate degradation; glycolysis; pyruvate from D-glyceraldehyde 3-phosphate: step 4/5. In terms of biological role, catalyzes the reversible conversion of 2-phosphoglycerate (2-PG) into phosphoenolpyruvate (PEP). It is essential for the degradation of carbohydrates via glycolysis. The sequence is that of Enolase from Christiangramia forsetii (strain DSM 17595 / CGMCC 1.15422 / KT0803) (Gramella forsetii).